The sequence spans 445 residues: Exodeoxyribonuclease 7 large subunit (445 aa).

Belongs to the XseA family. In terms of assembly, heterooligomer composed of large and small subunits.

It localises to the cytoplasm. The enzyme catalyses Exonucleolytic cleavage in either 5'- to 3'- or 3'- to 5'-direction to yield nucleoside 5'-phosphates.. Functionally, bidirectionally degrades single-stranded DNA into large acid-insoluble oligonucleotides, which are then degraded further into small acid-soluble oligonucleotides. This Staphylococcus saprophyticus subsp. saprophyticus (strain ATCC 15305 / DSM 20229 / NCIMB 8711 / NCTC 7292 / S-41) protein is Exodeoxyribonuclease 7 large subunit.